The chain runs to 283 residues: Probable aquaporin NIP4-2 (283 aa).

Met1 is subject to N-acetylmethionine. The span at 1 to 21 (MTSHGEEIEDEQISRIEKGNC) shows a compositional bias: basic and acidic residues. The interval 1 to 23 (MTSHGEEIEDEQISRIEKGNCKD) is disordered. Helical transmembrane passes span 51-71 (GTYF…LYGG) and 77-97 (GICV…GHIS). The NPA 1 signature appears at 102-104 (NPA). The next 3 membrane-spanning stretches (helical) occupy residues 120 to 140 (VPLY…TLRL), 161 to 181 (ALVA…GVAT), and 189 to 209 (LAGI…GPIS). Residues 214–216 (NPA) carry the NPA 2 motif. A helical transmembrane segment spans residues 231 to 251 (IWVYIVGPFVGIFAGGFVYNF). Ser267 is subject to Phosphoserine.

This sequence belongs to the MIP/aquaporin (TC 1.A.8) family. NIP (TC 1.A.8.12) subfamily.

The protein localises to the membrane. In terms of biological role, aquaporins facilitate the transport of water and small neutral solutes across cell membranes. This chain is Probable aquaporin NIP4-2 (NIP4-2), found in Arabidopsis thaliana (Mouse-ear cress).